The primary structure comprises 1890 residues: Callose synthase 9 (1890 aa).

At 1 to 489 the chain is on the cytoplasmic side; sequence MSRAESSWER…EHRTFLHLYH (489 aa). Residues 490–510 form a helical membrane-spanning segment; it reads SFHRLWIFLAMMFQALAIIAF. The Extracellular portion of the chain corresponds to 511–523; that stretch reads NKDDLTSRKTLLQ. A helical membrane pass occupies residues 524 to 544; it reads ILSLGPTFVVMKFSESVLEVI. Residues 545–560 are Cytoplasmic-facing; sequence MMYGAYSTTRRLAVSR. The chain crosses the membrane as a helical span at residues 561–581; it reads IFLRFIWFGLASVFISFLYVK. Topologically, residues 582–591 are extracellular; the sequence is SLKAPNSDSP. Residues 592 to 612 traverse the membrane as a helical segment; the sequence is IVQLYLIVIAIYGGVQFFFSI. Over 613–658 the chain is Cytoplasmic; sequence LMRIPTCHNIANKCDRWPVIRFFKWMRQERHYVGRGMYERTSDFIK. The helical transmembrane segment at 659–679 threads the bilayer; sequence YLLFWLVVLSAKFSFAYFLQI. Topologically, residues 680–722 are extracellular; it reads KPLVGPTRMIVKQNNIPYSWHDFVSRKNYNALTVASLWAPVVA. A helical transmembrane segment spans residues 723-743; sequence IYLLDIHIFYTIFSAFLGFLL. Residues 744-1457 are Cytoplasmic-facing; sequence GARDRLGEIR…QLLDFFRMMS (714 aa). Residues 1458–1478 form a helical membrane-spanning segment; sequence FFFTTVGFYLCTMLTVLTVYI. The Extracellular portion of the chain corresponds to 1479–1512; that stretch reads FLYGRAYLALSGVGATIRERAILLDDTALSAALN. A helical membrane pass occupies residues 1513 to 1533; sequence AQFLFQIGVFTAVPMVLGFIL. At 1534–1539 the chain is on the cytoplasmic side; the sequence is EQGFLQ. Residues 1540-1560 traverse the membrane as a helical segment; it reads AIVSFITMQFQLCTVFFTFSL. The Extracellular segment spans residues 1561–1609; it reads GTRTHYFGRTILHGGARYQATGRGFVVKHIKFSENYRLYSRSHFVKAME. A run of 2 helical transmembrane segments spans residues 1610 to 1630 and 1631 to 1651; these read VILL…AVSY and ILLT…PYLF. The Extracellular portion of the chain corresponds to 1652 to 1703; sequence NPAGFEWQKVVEDFKEWTNWLFYRGGIGVKGAESWEAWWEEELSHIRTLSGR. A helical membrane pass occupies residues 1704-1724; it reads IMETILSLRFFIFQYGIVYKL. Over 1725-1732 the chain is Cytoplasmic; the sequence is KLQGSDTS. A helical transmembrane segment spans residues 1733–1753; that stretch reads FAVYGWSWVAFAMIIVLFKVF. The Extracellular segment spans residues 1754–1768; it reads TFSQKISVNFQLLLR. A helical membrane pass occupies residues 1769–1789; sequence FIQGLSLLMALAGIIVAVVLT. Topologically, residues 1790–1795 are cytoplasmic; the sequence is PLSVTD. Residues 1796-1816 traverse the membrane as a helical segment; it reads IFACVLAFIPTGWGILSIACA. Over 1817-1838 the chain is Extracellular; sequence WKPVLKRMGMWKSIRSLARLYD. The helical transmembrane segment at 1839–1859 threads the bilayer; the sequence is ALMGMLIFLPVALCSWFPFVS. The Cytoplasmic segment spans residues 1860–1890; it reads TFQTRMMFNQAFSRGLEISLILAGDNPNSGL.

Belongs to the glycosyltransferase 48 family.

Its subcellular location is the cell membrane. The catalysed reaction is [(1-&gt;3)-beta-D-glucosyl](n) + UDP-alpha-D-glucose = [(1-&gt;3)-beta-D-glucosyl](n+1) + UDP + H(+). In terms of biological role, involved in sporophytic and gametophytic development. Required for normal plant development. During pollen formation, required for the entry of microspores into mitosis and microspore symmetric division. May be required for correct temporal and spatial control of callose deposition during pollen mitosis. During plant growth and development, callose is found as a transitory component of the cell plate in dividing cells, is a major component of pollen mother cell walls and pollen tubes, and is found as a structural component of plasmodesmatal canals. This Arabidopsis thaliana (Mouse-ear cress) protein is Callose synthase 9 (CALS9).